The chain runs to 82 residues: Putative membrane protein insertion efficiency factor (82 aa).

The protein belongs to the UPF0161 family.

The protein localises to the cell inner membrane. Functionally, could be involved in insertion of integral membrane proteins into the membrane. This chain is Putative membrane protein insertion efficiency factor, found in Francisella tularensis subsp. holarctica (strain LVS).